Here is a 248-residue protein sequence, read N- to C-terminus: Ribonuclease PH (248 aa).

Residues arginine 86 and 124 to 126 (GTR) each bind phosphate.

Belongs to the RNase PH family. In terms of assembly, homohexameric ring arranged as a trimer of dimers.

It carries out the reaction tRNA(n+1) + phosphate = tRNA(n) + a ribonucleoside 5'-diphosphate. Its function is as follows. Phosphorolytic 3'-5' exoribonuclease that plays an important role in tRNA 3'-end maturation. Removes nucleotide residues following the 3'-CCA terminus of tRNAs; can also add nucleotides to the ends of RNA molecules by using nucleoside diphosphates as substrates, but this may not be physiologically important. Probably plays a role in initiation of 16S rRNA degradation (leading to ribosome degradation) during starvation. The sequence is that of Ribonuclease PH from Clostridium perfringens (strain 13 / Type A).